Here is a 170-residue protein sequence, read N- to C-terminus: Large ribosomal subunit protein uL18c (170 aa).

Residues 1-63 (MLASPALAGA…QADRIARHVR (63 aa)) constitute a chloroplast transit peptide.

Belongs to the universal ribosomal protein uL18 family. Part of the 50S ribosomal subunit; contacts the 5S rRNA.

It is found in the plastid. The protein resides in the chloroplast. Binds 5S rRNA, forms part of the central protuberance of the 50S subunit. This Oryza sativa subsp. japonica (Rice) protein is Large ribosomal subunit protein uL18c (RPL18).